We begin with the raw amino-acid sequence, 605 residues long: Acetyl-coenzyme A carboxylase carboxyl transferase subunits beta/alpha (605 aa).

Positions 1-269 (MFKGLFKKTK…QRAEFLLKHG (269 aa)) are acetyl-coenzyme A carboxylase carboxyl transferase subunit beta. The 267-residue stretch at 40–306 (LWEKCDSCKS…SRMLDGNDCS (267 aa)) folds into the CoA carboxyltransferase N-terminal domain. Positions 40–570 (LWEKCDSCKS…KNNLLKTLDN (531 aa)) are carboxyltransferase. 4 residues coordinate Zn(2+): Cys-44, Cys-47, Cys-63, and Cys-66. The segment at 44-66 (CDSCKSIIYAEDLKKNYHICHEC) adopts a C4-type zinc-finger fold. An acetyl-coenzyme A carboxylase carboxyl transferase subunit alpha region spans residues 270-593 (FVDKVINRKE…YEKFRSIGRF (324 aa)). The CoA carboxyltransferase C-terminal domain maps to 317 to 570 (ASAKSVEEIR…KNNLLKTLDN (254 aa)).

The protein in the N-terminal section; belongs to the AccD/PCCB family. This sequence in the C-terminal section; belongs to the AccA family. In terms of assembly, acetyl-CoA carboxylase is a heterotetramer composed of biotin carboxyl carrier protein (AccB), biotin carboxylase (AccC) and two subunits of ACCase subunit beta/alpha. The cofactor is Zn(2+).

It localises to the cytoplasm. The catalysed reaction is N(6)-carboxybiotinyl-L-lysyl-[protein] + acetyl-CoA = N(6)-biotinyl-L-lysyl-[protein] + malonyl-CoA. It functions in the pathway lipid metabolism; malonyl-CoA biosynthesis; malonyl-CoA from acetyl-CoA: step 1/1. Functionally, component of the acetyl coenzyme A carboxylase (ACC) complex. Biotin carboxylase (BC) catalyzes the carboxylation of biotin on its carrier protein (BCCP) and then the CO(2) group is transferred by the transcarboxylase to acetyl-CoA to form malonyl-CoA. This Natranaerobius thermophilus (strain ATCC BAA-1301 / DSM 18059 / JW/NM-WN-LF) protein is Acetyl-coenzyme A carboxylase carboxyl transferase subunits beta/alpha (accD).